Here is a 261-residue protein sequence, read N- to C-terminus: Probable electron transfer flavoprotein subunit beta (261 aa).

An N-acetylserine modification is found at S2.

It belongs to the ETF beta-subunit/FixA family. In terms of assembly, heterodimer of an alpha and a beta subunit. Interacts with YFH1. The cofactor is FAD. It depends on AMP as a cofactor.

The protein resides in the mitochondrion matrix. Functionally, the electron transfer flavoprotein serves as a specific electron acceptor for several dehydrogenases, including five acyl-CoA dehydrogenases, glutaryl-CoA and sarcosine dehydrogenase. It transfers the electrons to the main mitochondrial respiratory chain via ETF-ubiquinone oxidoreductase (ETF dehydrogenase). The polypeptide is Probable electron transfer flavoprotein subunit beta (CIR1) (Saccharomyces cerevisiae (strain ATCC 204508 / S288c) (Baker's yeast)).